Here is a 411-residue protein sequence, read N- to C-terminus: LL-diaminopimelate aminotransferase (411 aa).

Residues Tyr-16 and Gly-43 each coordinate substrate. Pyridoxal 5'-phosphate contacts are provided by residues Tyr-73, 109–110, Tyr-133, Asn-188, Tyr-219, and 247–249; these read AK and SYS. Substrate contacts are provided by Lys-110, Tyr-133, and Asn-188. Lys-250 carries the N6-(pyridoxal phosphate)lysine modification. Positions 258 and 293 each coordinate pyridoxal 5'-phosphate. Substrate-binding residues include Asn-293 and Arg-389.

The protein belongs to the class-I pyridoxal-phosphate-dependent aminotransferase family. LL-diaminopimelate aminotransferase subfamily. In terms of assembly, homodimer. The cofactor is pyridoxal 5'-phosphate.

It catalyses the reaction (2S,6S)-2,6-diaminopimelate + 2-oxoglutarate = (S)-2,3,4,5-tetrahydrodipicolinate + L-glutamate + H2O + H(+). It functions in the pathway amino-acid biosynthesis; L-lysine biosynthesis via DAP pathway; LL-2,6-diaminopimelate from (S)-tetrahydrodipicolinate (aminotransferase route): step 1/1. In terms of biological role, involved in the synthesis of meso-diaminopimelate (m-DAP or DL-DAP), required for both lysine and peptidoglycan biosynthesis. Catalyzes the direct conversion of tetrahydrodipicolinate to LL-diaminopimelate. The protein is LL-diaminopimelate aminotransferase of Methanosphaera stadtmanae (strain ATCC 43021 / DSM 3091 / JCM 11832 / MCB-3).